The following is a 489-amino-acid chain: UDP-N-acetylmuramoyl-L-alanyl-D-glutamate--2,6-diaminopimelate ligase (489 aa).

Ser30 lines the UDP-N-acetyl-alpha-D-muramoyl-L-alanyl-D-glutamate pocket. Residue 108 to 114 (GTNGKTT) coordinates ATP. UDP-N-acetyl-alpha-D-muramoyl-L-alanyl-D-glutamate is bound by residues Asn149, 150–151 (TT), Ser177, Gln183, and Arg185. Lys217 is subject to N6-carboxylysine. Meso-2,6-diaminopimelate is bound by residues Arg383, 407–410 (DNPR), Gly459, and Glu463. The short motif at 407–410 (DNPR) is the Meso-diaminopimelate recognition motif element.

It belongs to the MurCDEF family. MurE subfamily. Mg(2+) serves as cofactor. Carboxylation is probably crucial for Mg(2+) binding and, consequently, for the gamma-phosphate positioning of ATP.

The protein localises to the cytoplasm. The enzyme catalyses UDP-N-acetyl-alpha-D-muramoyl-L-alanyl-D-glutamate + meso-2,6-diaminopimelate + ATP = UDP-N-acetyl-alpha-D-muramoyl-L-alanyl-gamma-D-glutamyl-meso-2,6-diaminopimelate + ADP + phosphate + H(+). Its pathway is cell wall biogenesis; peptidoglycan biosynthesis. Functionally, catalyzes the addition of meso-diaminopimelic acid to the nucleotide precursor UDP-N-acetylmuramoyl-L-alanyl-D-glutamate (UMAG) in the biosynthesis of bacterial cell-wall peptidoglycan. The sequence is that of UDP-N-acetylmuramoyl-L-alanyl-D-glutamate--2,6-diaminopimelate ligase from Geobacillus thermodenitrificans (strain NG80-2).